A 380-amino-acid chain; its full sequence is Cytochrome b (380 aa).

The next 4 membrane-spanning stretches (helical) occupy residues Phe34–Met54, Trp78–Ile99, Trp114–Leu134, and Phe179–Thr199. Heme b contacts are provided by His84 and His98. Heme b contacts are provided by His183 and His197. An a ubiquinone-binding site is contributed by His202. 4 helical membrane-spanning segments follow: residues Ile227–Ser247, Leu289–His309, Leu321–Ser341, and Phe348–Pro368.

This sequence belongs to the cytochrome b family. The cytochrome bc1 complex contains 11 subunits: 3 respiratory subunits (MT-CYB, CYC1 and UQCRFS1), 2 core proteins (UQCRC1 and UQCRC2) and 6 low-molecular weight proteins (UQCRH/QCR6, UQCRB/QCR7, UQCRQ/QCR8, UQCR10/QCR9, UQCR11/QCR10 and a cleavage product of UQCRFS1). This cytochrome bc1 complex then forms a dimer. The cofactor is heme b.

It is found in the mitochondrion inner membrane. Functionally, component of the ubiquinol-cytochrome c reductase complex (complex III or cytochrome b-c1 complex) that is part of the mitochondrial respiratory chain. The b-c1 complex mediates electron transfer from ubiquinol to cytochrome c. Contributes to the generation of a proton gradient across the mitochondrial membrane that is then used for ATP synthesis. The chain is Cytochrome b (MT-CYB) from Alectoris rufa (Red-legged partridge).